The sequence spans 408 residues: tRNA-specific 2-thiouridylase MnmA (408 aa).

Residues 38 to 45 (GMSGGVDS) and M64 contribute to the ATP site. Positions 124–126 (NPD) are interaction with target base in tRNA. C129 acts as the Nucleophile in catalysis. C129 and C231 are oxidised to a cystine. G153 contacts ATP. The interaction with tRNA stretch occupies residues 181 to 183 (KDQ). The active-site Cysteine persulfide intermediate is C231. An interaction with tRNA region spans residues 348–349 (RY).

It belongs to the MnmA/TRMU family.

The protein localises to the cytoplasm. It carries out the reaction S-sulfanyl-L-cysteinyl-[protein] + uridine(34) in tRNA + AH2 + ATP = 2-thiouridine(34) in tRNA + L-cysteinyl-[protein] + A + AMP + diphosphate + H(+). Its function is as follows. Catalyzes the 2-thiolation of uridine at the wobble position (U34) of tRNA, leading to the formation of s(2)U34. This is tRNA-specific 2-thiouridylase MnmA from Psychrobacter cryohalolentis (strain ATCC BAA-1226 / DSM 17306 / VKM B-2378 / K5).